We begin with the raw amino-acid sequence, 858 residues long: MQEQYNPQDLEQKIQKHWDDNKTFVVTEDANKEKFYCLSMFPYPSGRLHMGHVRNYTIGDVVSRYQRLQGKNVMQPIGWDAFGLPAENAAVKNKTAPAPWTYENIEYMKNQLKLLGFGYDWNREFATCTPEYYRWEQEFFTKLYNKGLVYKKTSSVNWCPNDQTVLANEQVEDGCCWRCDTPVEQKKIPQWFIKITEYAQELLDDLDNLDGWPEMVKTMQRNWIGRSEGVELSFAVNGETSPLEVYTTRPDTLMGVTYVGIAAGHPLAEKASQNNPELAAFVEECRNTKVAEAELATMEKKGMDTGLRAIHPLNGREVPVFVANFVLMDYGTGAVMAVPAHDQRDFEFATKYGLDIIPVIKPEDGSDLDVSEAAYTEKGVLFDSGEFDGLAFQEAFDAIAAKLEAEGKGKKTVNFRLRDWGVSRQRYWGAPIPMVTTEDGEVHPVPADQLPVILPEDVVMDGVTSPIKADKEWAKTTFNGEPALRETDTFDTFMESSWYYARYCSPQADDILDPEKANYWLPVDQYIGGIEHACMHLLYSRFFHKLLRDAGYVTSDEPFKQLLCQGMVLADAFYYTNDKGGKEWVAPTDVTIERDGKGRIEKAIDDQGREVEHSGMIKMSKSKNNGIDPQEMVDKYGADTVRLFMMFASPADMTLEWQESGVEGANRFLKRVWKLVHEHTNKGTTEALDTSSLTGDQKALRRDVHKTIAKVSDDIGRRQTFNTAIAAIMELMNKLNKAPQESAQDRALLDEALKAVVAMLYPMTPHASFAMWEALGESDLDSATWPTFDENALVEDEKTIVVMINGKLRAKLVVAADATEEHVRELGLKDENAMKFLDGLTIRKVIYVPGKLLNIVAN.

The short motif at 42 to 52 (PYPSGRLHMGH) is the 'HIGH' region element. The short motif at 618 to 622 (KMSKS) is the 'KMSKS' region element. Position 621 (lysine 621) interacts with ATP.

It belongs to the class-I aminoacyl-tRNA synthetase family.

It localises to the cytoplasm. It catalyses the reaction tRNA(Leu) + L-leucine + ATP = L-leucyl-tRNA(Leu) + AMP + diphosphate. This Aliivibrio fischeri (strain ATCC 700601 / ES114) (Vibrio fischeri) protein is Leucine--tRNA ligase.